We begin with the raw amino-acid sequence, 229 residues long: Ferric nitrobindin-like protein (229 aa).

The disordered stretch occupies residues 1-54 (MSENSTPNNPVVPGAGADGPSLSDSASISGSDAVNLAAEQSKSTAHRNIPGLGD). Positions 18 to 33 (DGPSLSDSASISGSDA) are enriched in low complexity. Residues 82–88 (GVWRGEG) carry the GXWXGXG motif.

The protein belongs to the nitrobindin family.

This Corynebacterium glutamicum (strain R) protein is Ferric nitrobindin-like protein.